The primary structure comprises 450 residues: Probable ECA polymerase (450 aa).

Transmembrane regions (helical) follow at residues 6 to 26 (FSGL…LTWF), 37 to 57 (VFFS…TSVL), 63 to 83 (VGVA…CFYA), 118 to 138 (VILM…NGFL), 155 to 175 (GVAL…VYFL), 181 to 201 (AWLF…MIVG), 207 to 227 (IIIA…ISLW), 228 to 248 (MLAA…LKRY), 341 to 361 (LVVM…GLII), 378 to 398 (YKAA…IVLA), and 410 to 430 (VFFI…YWLF).

Belongs to the WzyE family. Probably part of a complex composed of WzxE, WzyE and WzzE.

The protein localises to the cell inner membrane. It participates in bacterial outer membrane biogenesis; enterobacterial common antigen biosynthesis. Probably involved in the polymerization of enterobacterial common antigen (ECA) trisaccharide repeat units. This Shigella boydii serotype 18 (strain CDC 3083-94 / BS512) protein is Probable ECA polymerase.